Reading from the N-terminus, the 466-residue chain is CCA-adding enzyme (466 aa).

2 residues coordinate ATP: Ser-55 and Arg-58. 2 residues coordinate CTP: Ser-55 and Arg-58. Residues Asp-67, Asp-69, and Asp-118 each contribute to the Mg(2+) site. His-141, Lys-161, and Tyr-170 together coordinate ATP. CTP-binding residues include His-141, Lys-161, and Tyr-170.

Belongs to the tRNA nucleotidyltransferase/poly(A) polymerase family. Archaeal CCA-adding enzyme subfamily. In terms of assembly, homodimer. It depends on Mg(2+) as a cofactor.

It carries out the reaction a tRNA precursor + 2 CTP + ATP = a tRNA with a 3' CCA end + 3 diphosphate. The catalysed reaction is a tRNA with a 3' CCA end + 2 CTP + ATP = a tRNA with a 3' CCACCA end + 3 diphosphate. Catalyzes the addition and repair of the essential 3'-terminal CCA sequence in tRNAs without using a nucleic acid template. Adds these three nucleotides in the order of C, C, and A to the tRNA nucleotide-73, using CTP and ATP as substrates and producing inorganic pyrophosphate. tRNA 3'-terminal CCA addition is required both for tRNA processing and repair. Also involved in tRNA surveillance by mediating tandem CCA addition to generate a CCACCA at the 3' terminus of unstable tRNAs. While stable tRNAs receive only 3'-terminal CCA, unstable tRNAs are marked with CCACCA and rapidly degraded. In Haloarcula marismortui (strain ATCC 43049 / DSM 3752 / JCM 8966 / VKM B-1809) (Halobacterium marismortui), this protein is CCA-adding enzyme.